Reading from the N-terminus, the 485-residue chain is Hydrogenase transcriptional regulatory protein HoxA (485 aa).

Positions threonine 6 to valine 120 constitute a Response regulatory domain. Aspartate 54 is subject to 4-aspartylphosphate. The region spanning serine 166–alanine 392 is the Sigma-54 factor interaction domain. Residues glycine 192 to glutamate 199 and glutamate 264 to glutamine 273 each bind ATP. A disordered region spans residues proline 404–serine 426. Positions asparagine 451–leucine 470 form a DNA-binding region, H-T-H motif.

The protein resides in the cytoplasm. In terms of biological role, probable member of the two-component regulatory system involved in the regulation of the hydrogenase activity. HoxA is probably phosphorylated by a sensory component (which could be HoxX) and then acts in conjunction with sigma-54 as a transcriptional activator. In Bradyrhizobium diazoefficiens (strain JCM 10833 / BCRC 13528 / IAM 13628 / NBRC 14792 / USDA 110), this protein is Hydrogenase transcriptional regulatory protein HoxA (hoxA).